Here is a 210-residue protein sequence, read N- to C-terminus: FMN-dependent NADH:quinone oxidoreductase (210 aa).

Residues S10 and 16-18 contribute to the FMN site; that span reads SRS.

The protein belongs to the azoreductase type 1 family. In terms of assembly, homodimer. FMN is required as a cofactor.

The catalysed reaction is 2 a quinone + NADH + H(+) = 2 a 1,4-benzosemiquinone + NAD(+). It carries out the reaction N,N-dimethyl-1,4-phenylenediamine + anthranilate + 2 NAD(+) = 2-(4-dimethylaminophenyl)diazenylbenzoate + 2 NADH + 2 H(+). In terms of biological role, quinone reductase that provides resistance to thiol-specific stress caused by electrophilic quinones. Its function is as follows. Also exhibits azoreductase activity. Catalyzes the reductive cleavage of the azo bond in aromatic azo compounds to the corresponding amines. The polypeptide is FMN-dependent NADH:quinone oxidoreductase (Kineococcus radiotolerans (strain ATCC BAA-149 / DSM 14245 / SRS30216)).